Consider the following 178-residue polypeptide: Probable major fimbrial subunit LpfA (178 aa).

An N-terminal signal peptide occupies residues 1-24 (MEFFMKKVVFALTALALTSGTVFA).

The protein belongs to the fimbrial protein family.

The protein resides in the fimbrium. In terms of biological role, part of the lpfABCC'DE fimbrial operon. LP fimbriae may participate in the interaction with eukaryotic cells by assisting in microcolony formation. The polypeptide is Probable major fimbrial subunit LpfA (lpfA) (Escherichia coli O157:H7).